The primary structure comprises 477 residues: Glutamate--tRNA ligase (477 aa).

Positions 8–18 (PSPTGTLHIGT) match the 'HIGH' region motif. Residues 247–251 (KLSKR) carry the 'KMSKS' region motif. ATP is bound at residue K250.

Belongs to the class-I aminoacyl-tRNA synthetase family. Glutamate--tRNA ligase type 1 subfamily. In terms of assembly, monomer.

The protein localises to the cytoplasm. The enzyme catalyses tRNA(Glu) + L-glutamate + ATP = L-glutamyl-tRNA(Glu) + AMP + diphosphate. Its function is as follows. Catalyzes the attachment of glutamate to tRNA(Glu) in a two-step reaction: glutamate is first activated by ATP to form Glu-AMP and then transferred to the acceptor end of tRNA(Glu). This chain is Glutamate--tRNA ligase, found in Parasynechococcus marenigrum (strain WH8102).